Consider the following 150-residue polypeptide: 1,4-dihydroxy-2-naphthoyl-CoA hydrolase (150 aa).

Residue aspartate 19 is part of the active site.

It belongs to the 4-hydroxybenzoyl-CoA thioesterase family. DHNA-CoA hydrolase subfamily.

The catalysed reaction is 1,4-dihydroxy-2-naphthoyl-CoA + H2O = 1,4-dihydroxy-2-naphthoate + CoA + H(+). Its pathway is cofactor biosynthesis; phylloquinone biosynthesis. It participates in quinol/quinone metabolism; 1,4-dihydroxy-2-naphthoate biosynthesis; 1,4-dihydroxy-2-naphthoate from chorismate: step 7/7. Catalyzes the hydrolysis of 1,4-dihydroxy-2-naphthoyl-CoA (DHNA-CoA) to 1,4-dihydroxy-2-naphthoate (DHNA), a reaction involved in phylloquinone (vitamin K1) biosynthesis. The polypeptide is 1,4-dihydroxy-2-naphthoyl-CoA hydrolase (Prochlorococcus marinus (strain AS9601)).